We begin with the raw amino-acid sequence, 310 residues long: Alpha/beta hydrolase domain-containing protein 17A (310 aa).

Active-site charge relay system residues include serine 190, aspartate 255, and histidine 284. At serine 307 the chain carries Phosphoserine.

Belongs to the AB hydrolase superfamily. ABHD17 family. Palmitoylated on cysteine residues located in a cysteine cluster at the N-terminus which promotes membrane localization. Palmitoylation is required for post-synaptic localization and for depalmitoylating activity towards DLG4/PSD95.

Its subcellular location is the cell membrane. The protein resides in the endosome membrane. The protein localises to the cell projection. It localises to the dendritic spine. It is found in the postsynaptic density membrane. The enzyme catalyses S-hexadecanoyl-L-cysteinyl-[protein] + H2O = L-cysteinyl-[protein] + hexadecanoate + H(+). Inhibited by palmostatin-B. Its function is as follows. Hydrolyzes fatty acids from S-acylated cysteine residues in proteins. Has depalmitoylating activity towards NRAS. Has depalmitoylating activity towards DLG4/PSD95. May have depalmitoylating activity towards MAP6. The polypeptide is Alpha/beta hydrolase domain-containing protein 17A (Homo sapiens (Human)).